Here is a 241-residue protein sequence, read N- to C-terminus: 1-(5-phosphoribosyl)-5-[(5-phosphoribosylamino)methylideneamino] imidazole-4-carboxamide isomerase (241 aa).

The active-site Proton acceptor is the D8. D127 functions as the Proton donor in the catalytic mechanism.

This sequence belongs to the HisA/HisF family.

It is found in the cytoplasm. It catalyses the reaction 1-(5-phospho-beta-D-ribosyl)-5-[(5-phospho-beta-D-ribosylamino)methylideneamino]imidazole-4-carboxamide = 5-[(5-phospho-1-deoxy-D-ribulos-1-ylimino)methylamino]-1-(5-phospho-beta-D-ribosyl)imidazole-4-carboxamide. The protein operates within amino-acid biosynthesis; L-histidine biosynthesis; L-histidine from 5-phospho-alpha-D-ribose 1-diphosphate: step 4/9. In Thermotoga petrophila (strain ATCC BAA-488 / DSM 13995 / JCM 10881 / RKU-1), this protein is 1-(5-phosphoribosyl)-5-[(5-phosphoribosylamino)methylideneamino] imidazole-4-carboxamide isomerase.